We begin with the raw amino-acid sequence, 32 residues long: Seminal plasma protein PDC-109 (32 aa).

The segment at 1–32 (DQDEGVSTEPTQVGPAELHNDETCVGPLVYRN) is disordered. Threonine 11 is a glycosylation site (O-linked (GalNAc...) threonine). A Fibronectin type-II domain is found at 19–32 (HNDETCVGPLVYRN).

This sequence belongs to the seminal plasma protein family. In terms of assembly, homodimer.

It localises to the secreted. Its function is as follows. Could enhance the fertilizing capacity of bull spermatozoa upon interaction with heparin-like glycosaminoglycans present in the female genital tract. Exhibits both simulatory and inhibitory actions on the release of pituitary gonadotropins. Binds to heparin and gelatin. The polypeptide is Seminal plasma protein PDC-109 (Bos indicus (Zebu)).